The sequence spans 142 residues: Large ribosomal subunit protein uL13 (142 aa).

This sequence belongs to the universal ribosomal protein uL13 family. Part of the 50S ribosomal subunit.

This protein is one of the early assembly proteins of the 50S ribosomal subunit, although it is not seen to bind rRNA by itself. It is important during the early stages of 50S assembly. The polypeptide is Large ribosomal subunit protein uL13 (Xylella fastidiosa (strain M23)).